We begin with the raw amino-acid sequence, 394 residues long: Elongation factor Tu (394 aa).

The region spanning 10–204 is the tr-type G domain; that stretch reads KPHVNIGTIG…AVDSYIPQPV (195 aa). Residues 19 to 26 form a G1 region; that stretch reads GHVDHGKT. 19 to 26 contributes to the GTP binding site; that stretch reads GHVDHGKT. T26 contributes to the Mg(2+) binding site. The G2 stretch occupies residues 60–64; the sequence is GITIS. The segment at 81–84 is G3; the sequence is DCPG. GTP is bound by residues 81–85 and 136–139; these read DCPGH and NKVD. Positions 136–139 are G4; the sequence is NKVD. The segment at 174 to 176 is G5; the sequence is SAL.

Belongs to the TRAFAC class translation factor GTPase superfamily. Classic translation factor GTPase family. EF-Tu/EF-1A subfamily. In terms of assembly, monomer.

The protein resides in the cytoplasm. The enzyme catalyses GTP + H2O = GDP + phosphate + H(+). Functionally, GTP hydrolase that promotes the GTP-dependent binding of aminoacyl-tRNA to the A-site of ribosomes during protein biosynthesis. This is Elongation factor Tu from Rickettsia montanensis.